Here is a 631-residue protein sequence, read N- to C-terminus: Chaperone protein DnaK (631 aa).

T198 carries the phosphothreonine; by autocatalysis modification. Residues 602–631 (EAAGGAQQAGKDDVVDAEFTEVDDDKKKSA) form a disordered region.

This sequence belongs to the heat shock protein 70 family.

Functionally, acts as a chaperone. The sequence is that of Chaperone protein DnaK from Rhodopseudomonas palustris (strain ATCC BAA-98 / CGA009).